The sequence spans 510 residues: Bone morphogenetic protein 6 (510 aa).

An N-terminal signal peptide occupies residues 1–20; the sequence is MPGLGRRAQWLCWWWGLLCS. A propeptide spanning residues 21-371 is cleaved from the precursor; it reads CGPPPLRPPL…VSEVHVRTTR (351 aa). Disordered regions lie at residues 87–129 and 143–199; these read PHRP…RLKS and NDDE…PLTS. Over residues 106 to 116 the composition is skewed to low complexity; that stretch reads PQQQQQQQQQQ. Asn-238, Asn-266, Asn-383, Asn-401, and Asn-451 each carry an N-linked (GlcNAc...) asparagine glycan. Residues 370–402 are disordered; the sequence is TRSASSRRRQQSRNRSTQSQDVSRGSGSSDYNG. Residues 390-401 are compositionally biased toward polar residues; the sequence is DVSRGSGSSDYN. 3 cysteine pairs are disulfide-bonded: Cys-409–Cys-475, Cys-438–Cys-507, and Cys-442–Cys-509.

It belongs to the TGF-beta family. In terms of assembly, interacts with SOSTDC1. Interacts (when glycosylated) with type I receptor ACVR1; the interaction may induce HAMP expression. Interacts with type II receptor ACVR2B. Interacts with Hemojuvelin/HJV. Interacts with ERFE; the interaction inhibits BMP-induced transcription of HAMP. Interacts with BMPR1A/ALK3. Forms heterodimers with BMP2 in vitro; the heterodimer then binds to its receptor BMPR1A /ALK3 and may induce HAMP expression. As to expression, expressed in the lung. Low levels seen in the kidney.

It localises to the secreted. Growth factor of the TGF-beta superfamily that plays essential roles in many developmental processes including cartilage and bone formation. Also plays an important role in the regulation of HAMP/hepcidin expression and iron metabolism by acting as a ligand for hemojuvelin/HJV. Also acts to promote expression of HAMP, potentially via the interaction with its receptor BMPR1A/ALK3. Initiates the canonical BMP signaling cascade by associating with type I receptor ACVR1 and type II receptor ACVR2B. In turn, ACVR1 propagates signal by phosphorylating SMAD1/5/8 that travel to the nucleus and act as activators and repressors of transcription of target. Can also signal through non-canonical pathway such as TAZ-Hippo signaling cascade to modulate VEGF signaling by regulating VEGFR2 expression. The sequence is that of Bone morphogenetic protein 6 (Bmp6) from Mus musculus (Mouse).